The sequence spans 321 residues: Putative membrane-bound redox modulator Alx (321 aa).

At 1–6 (MNTVGT) the chain is on the periplasmic side. A helical membrane pass occupies residues 7–27 (PLLWGGFAVVVAIMLAIDLLL). At 28–43 (QGRRGAHAMTMKQAAA) the chain is on the cytoplasmic side. Residues 44 to 64 (WSLVWVTLSLLFNAAFWWYLV) traverse the membrane as a helical segment. The Periplasmic portion of the chain corresponds to 65–89 (QTEGRAVADPQALAFLTGYLIEKSL). Residues 90–110 (AVDNVFVWLMLFSYFSVPAAL) traverse the membrane as a helical segment. Topologically, residues 111 to 113 (QRR) are cytoplasmic. The chain crosses the membrane as a helical span at residues 114–134 (VLVYGVLGAIVLRTIMIFTGS). A topological domain (periplasmic) is located at residue Trp-135. The chain crosses the membrane as a helical span at residues 136 to 156 (LISQFDWILYIFGAFLLFTGV). Topologically, residues 157–198 (KMALAHEDESGIGDKPLVRWLRGHLRMTDTIDNEHFFVRKNG) are cytoplasmic. A helical membrane pass occupies residues 199–219 (LLYATPLMLVLILVELSDVIF). The Periplasmic segment spans residues 220-225 (AVDSIP). A helical membrane pass occupies residues 226 to 246 (AIFAVTTDPFIVLTSNLFAIL). Residues 247 to 261 (GLRAMYFLLAGVAER) lie on the Cytoplasmic side of the membrane. A helical transmembrane segment spans residues 262 to 282 (FSMLKYGLAVILVFIGIKMLI). Residues 283–286 (VDFY) lie on the Periplasmic side of the membrane. Residues 287-307 (HIPIAVSLGVVFGILVMTFII) form a helical membrane-spanning segment. Residues 308-321 (NAWVNYRHDKQRGG) lie on the Cytoplasmic side of the membrane.

The protein belongs to the TerC family.

The protein resides in the cell inner membrane. In terms of biological role, has been proposed to be a redox modulator. The polypeptide is Putative membrane-bound redox modulator Alx (Escherichia coli (strain K12)).